A 255-amino-acid chain; its full sequence is Tachylectin-2 (255 aa).

The N-terminal stretch at 1 to 19 is a signal peptide; the sequence is MKFLLVVLGFIGFLKDGIT. WD repeat units lie at residues 20–67, 68–114, 115–161, 162–208, and 209–255; these read VGGE…FLFL, SPGG…FLFF, DPNG…FLFF, HPNG…FLFF, and SSVG…FLFF.

Monomer.

It localises to the secreted. It is found in the cytoplasmic granule. Functionally, lectin that binds specifically to N-acetylglucosamine and N-acetylgalactosamine. Is part of the innate immunity host defense system of the horseshoe crab. This chain is Tachylectin-2, found in Tachypleus tridentatus (Japanese horseshoe crab).